Consider the following 338-residue polypeptide: RNA 3'-terminal phosphate cyclase (338 aa).

ATP-binding positions include glutamine 103 and 283 to 287 (YLADQ). The active-site Tele-AMP-histidine intermediate is histidine 308.

Belongs to the RNA 3'-terminal cyclase family. Type 1 subfamily.

The protein localises to the cytoplasm. It catalyses the reaction a 3'-end 3'-phospho-ribonucleotide-RNA + ATP = a 3'-end 2',3'-cyclophospho-ribonucleotide-RNA + AMP + diphosphate. Its function is as follows. Catalyzes the conversion of 3'-phosphate to a 2',3'-cyclic phosphodiester at the end of RNA. The mechanism of action of the enzyme occurs in 3 steps: (A) adenylation of the enzyme by ATP; (B) transfer of adenylate to an RNA-N3'P to produce RNA-N3'PP5'A; (C) and attack of the adjacent 2'-hydroxyl on the 3'-phosphorus in the diester linkage to produce the cyclic end product. The biological role of this enzyme is unknown but it is likely to function in some aspects of cellular RNA processing. The chain is RNA 3'-terminal phosphate cyclase from Escherichia coli O17:K52:H18 (strain UMN026 / ExPEC).